A 73-amino-acid polypeptide reads, in one-letter code: Stigmurin (73 aa).

The signal sequence occupies residues 1 to 22 (MQIKHLITLFFLVLIVADQCSA). A Lysine amide modification is found at Lys39. A propeptide spanning residues 45–73 (EISAQIEQYKDLQKREAELEKLLDRLPMY) is cleaved from the precursor.

Belongs to the non-disulfide-bridged peptide (NDBP) superfamily. Short antimicrobial peptide (group 4) family. In terms of tissue distribution, expressed by the venom gland.

The protein localises to the secreted. Its function is as follows. Antimicrobial peptide with activity against Gram-positive bacterial strains (S.aureus (MIC=2-140 uM), methicillin-resistant S.aureus (MRSA) (MIC=8-17 uM), S.epidermidis (MIC=1.17 uM), and the yeasts C.albicans, C.krusei, and C.glabrata (MIC=34-69 uM)). Acts by disrupting the cell membrane (observed on outer layer of the S.aureus). Is not active against Gram-negative bacteria (E.coli, E.Cloacae, P.aeruginosa), and the Gram-positive bacterium E.faecalis. Also shows toxicity against several cell lines, but possess low hemolytic activity at the highest concentration tested. Also shows antiparasitic activity against Trypanosoma cruzi by decreasing the viability of the epimastigote and trypomastigote forms of the parasite. Displays high hydroxyl radical scavenging activity (antioxidant action). In a wound infection model, the topical application of this peptide demonstrates antibacterial effects, as well as an ability to accelerate wound closure speed, which suggests the induction of tissue repair. In the model of polymicrobial sepsis, it exhibits an antibiotic effect, reducing the levels of microorganisms in the infectious focus and the inflammatory responses in the lung and cecum of septic animals. The chain is Stigmurin from Tityus stigmurus (Brazilian scorpion).